The chain runs to 237 residues: Putative ATP-binding protein BMEII0108 (237 aa).

An ABC transporter domain is found at 5–205; the sequence is ISFNNVVMRY…DLPYPRTEAI (201 aa). 37–44 lines the ATP pocket; sequence GPSGCGKS.

The protein belongs to the ABC transporter superfamily. The complex is composed of two ATP-binding proteins (BMEII0108), two transmembrane proteins (BMEII0107) and a solute-binding protein (BMEII0109).

It is found in the cell inner membrane. In terms of biological role, probably part of an ABC transporter complex. Probably Responsible for energy coupling to the transport system. The protein is Putative ATP-binding protein BMEII0108 of Brucella melitensis biotype 1 (strain ATCC 23456 / CCUG 17765 / NCTC 10094 / 16M).